We begin with the raw amino-acid sequence, 573 residues long: Mitochondrial distribution and morphology protein 34 (573 aa).

An SMP-LTD domain is found at 1 to 195 (MAFNFNWSPL…LPAIIHRLSL (195 aa)). Disordered regions lie at residues 301 to 326 (EGLGSGLMSPGSPALSRTHSHISSPL), 349 to 433 (FSGY…RFPN), 499 to 521 (SREKSMEAQSSHGPNPGLSITDA), and 550 to 573 (LVNNNYPGPWEQTRARTPPPAYGQ). Residues 306 to 316 (GLMSPGSPALS) show a composition bias toward low complexity. Basic residues predominate over residues 360–373 (RHTKARPTKKRKKR). The span at 374–385 (VVDLRKQSKPTD) shows a compositional bias: basic and acidic residues. Residues 396–409 (TETSTASTTFSSST) show a composition bias toward low complexity.

This sequence belongs to the MDM34 family. Component of the ER-mitochondria encounter structure (ERMES) or MDM complex, composed of MMM1, MDM10, MDM12 and MDM34.

The protein localises to the mitochondrion outer membrane. In terms of biological role, component of the ERMES/MDM complex, which serves as a molecular tether to connect the endoplasmic reticulum (ER) and mitochondria. Components of this complex are involved in the control of mitochondrial shape and protein biogenesis, and function in nonvesicular lipid trafficking between the ER and mitochondria. MDM34 is required for the interaction of the ER-resident membrane protein MMM1 and the outer mitochondrial membrane-resident beta-barrel protein MDM10. The sequence is that of Mitochondrial distribution and morphology protein 34 from Uncinocarpus reesii (strain UAMH 1704).